We begin with the raw amino-acid sequence, 355 residues long: MNPIRKIIHIDMDCFYAAIEMRDFPELANKPIAVGGDAKRRGVIATCNYAARQFGIRSAMPTAHALKLCRELILRPVRMDVYQKESQYIRSLLTEYTDLVEPLSLDEAYLDVTESTQCQGSATWIAEEIRARIYQTRQLTASAGIAPNKSLAKIASDWHKPNGQMVIRPEDVSAFVLDLPVRKLFGVGPKMEEKLGALNIKTCADLQRYSVEYLLQKFGTMGQRLYELARGIDNRPVNPERIRKSISVEETYPKDLPNSEACLAVLPDLMARLEARIQRAGKISGIHNLFVKLKFNDFQQTTIERVMDKLDLIVLRQLIQEGFARRGMPVRLLGIGIKLKQENTYQSIQLPLLDL.

The UmuC domain maps to 7 to 188 (IIHIDMDCFY…LPVRKLFGVG (182 aa)). Mg(2+) contacts are provided by aspartate 11 and aspartate 106. Glutamate 107 is a catalytic residue.

This sequence belongs to the DNA polymerase type-Y family. Monomer. Mg(2+) is required as a cofactor.

The protein localises to the cytoplasm. It catalyses the reaction DNA(n) + a 2'-deoxyribonucleoside 5'-triphosphate = DNA(n+1) + diphosphate. Poorly processive, error-prone DNA polymerase involved in untargeted mutagenesis. Copies undamaged DNA at stalled replication forks, which arise in vivo from mismatched or misaligned primer ends. These misaligned primers can be extended by PolIV. Exhibits no 3'-5' exonuclease (proofreading) activity. May be involved in translesional synthesis, in conjunction with the beta clamp from PolIII. This chain is DNA polymerase IV, found in Legionella pneumophila (strain Paris).